The primary structure comprises 603 residues: Baeyer-Villiger monooxygenase (603 aa).

FAD is bound by residues Glu-94, Thr-102–Trp-105, Asp-114, Tyr-120, and Val-164. His-112–Asp-114 provides a ligand contact to NADP(+). NADP(+)-binding positions include Thr-248 to Gln-254, Arg-271 to Thr-272, and Lys-386 to Arg-387.

Belongs to the FAD-binding monooxygenase family. It depends on FAD as a cofactor.

Catalyzes a Baeyer-Villiger oxidation reaction, i.e. the insertion of an oxygen atom into a carbon-carbon bond adjacent to a carbonyl, which converts ketones to esters or lactones using NADPH and/or NADH as an electron donor. Thus, can convert bicyclo[3.2.0]hept-2-en-6-one into the oxidative lactone products 2-oxabicyclo[3.3.0]oct-6-en-3-one and 3-oxabicyclo[3.3.0]oct-6-en-2-one. Is also able to catalyze the sulfoxidation of methyl phenyl sulfide (thioanisole). The chain is Baeyer-Villiger monooxygenase from Streptomyces coelicolor (strain ATCC BAA-471 / A3(2) / M145).